A 64-amino-acid polypeptide reads, in one-letter code: Beta-defensin 5 (64 aa).

Positions 1–22 (MRLHHLLLVLLFLVLSAGSGFT) are cleaved as a signal peptide. Pyrrolidone carboxylic acid is present on Q23. 3 cysteine pairs are disulfide-bonded: C31-C60, C38-C53, and C43-C61.

Belongs to the beta-defensin family. As to expression, neutrophilic granules. Alveolar macrophages.

The protein localises to the secreted. In terms of biological role, has bactericidal activity. Active against E.coli ML35 but not against S.aureus 502A. The sequence is that of Beta-defensin 5 (DEFB5) from Bos taurus (Bovine).